A 248-amino-acid polypeptide reads, in one-letter code: MGNKINPNGFRLGITRGWNSRWYAGKKQYAGLLKEDEKIRKLVDKKLSAAGIARVEIERAGQQVNVIISAAKPGIVIGKGGDSIKQLRADIEKLVSAGTVAVNVAEIPNPNISAPLVALRIAEQIERRFAFRRAMKQAAQRVMESGARGVKVVLSGRLGGAEQARRETVREGRVPLHTLRADIDYGTALARTTYGILGIKVMVFTGEVIGGRTETIARPQRRNDERRPEGGDRANRRRPTARRRAGGE.

A KH type-2 domain is found at 39-108 (IRKLVDKKLS…TVAVNVAEIP (70 aa)). The tract at residues 214–248 (ETIARPQRRNDERRPEGGDRANRRRPTARRRAGGE) is disordered. The span at 221–234 (RRNDERRPEGGDRA) shows a compositional bias: basic and acidic residues. The span at 235 to 248 (NRRRPTARRRAGGE) shows a compositional bias: basic residues.

The protein belongs to the universal ribosomal protein uS3 family. In terms of assembly, part of the 30S ribosomal subunit. Forms a tight complex with proteins S10 and S14.

Its function is as follows. Binds the lower part of the 30S subunit head. Binds mRNA in the 70S ribosome, positioning it for translation. This is Small ribosomal subunit protein uS3 from Deinococcus deserti (strain DSM 17065 / CIP 109153 / LMG 22923 / VCD115).